The primary structure comprises 259 residues: Small ribosomal subunit protein uS2 (259 aa).

Belongs to the universal ribosomal protein uS2 family.

In Streptococcus pneumoniae (strain Hungary19A-6), this protein is Small ribosomal subunit protein uS2.